A 145-amino-acid chain; its full sequence is Transcription antitermination protein NusB (145 aa).

Belongs to the NusB family.

Its function is as follows. Involved in transcription antitermination. Required for transcription of ribosomal RNA (rRNA) genes. Binds specifically to the boxA antiterminator sequence of the ribosomal RNA (rrn) operons. The sequence is that of Transcription antitermination protein NusB from Burkholderia lata (strain ATCC 17760 / DSM 23089 / LMG 22485 / NCIMB 9086 / R18194 / 383).